We begin with the raw amino-acid sequence, 353 residues long: Quinolinate synthase (353 aa).

Histidine 47 and serine 68 together coordinate iminosuccinate. Cysteine 113 is a binding site for [4Fe-4S] cluster. Residues 139 to 141 (YAN) and serine 156 each bind iminosuccinate. Cysteine 200 contributes to the [4Fe-4S] cluster binding site. Iminosuccinate contacts are provided by residues 226–228 (HPE) and threonine 243. Cysteine 297 is a [4Fe-4S] cluster binding site.

Belongs to the quinolinate synthase family. Type 1 subfamily. Requires [4Fe-4S] cluster as cofactor.

The protein localises to the cytoplasm. The catalysed reaction is iminosuccinate + dihydroxyacetone phosphate = quinolinate + phosphate + 2 H2O + H(+). It participates in cofactor biosynthesis; NAD(+) biosynthesis; quinolinate from iminoaspartate: step 1/1. Catalyzes the condensation of iminoaspartate with dihydroxyacetone phosphate to form quinolinate. This is Quinolinate synthase from Yersinia pseudotuberculosis serotype O:3 (strain YPIII).